Consider the following 276-residue polypeptide: F420-dependent methylenetetrahydromethanopterin dehydrogenase (276 aa).

Belongs to the MTD family.

The catalysed reaction is 5,10-methylenetetrahydromethanopterin + oxidized coenzyme F420-(gamma-L-Glu)(n) + 2 H(+) = 5,10-methenyl-5,6,7,8-tetrahydromethanopterin + reduced coenzyme F420-(gamma-L-Glu)(n). Its function is as follows. Catalyzes the oxidation of methylene-H(4)MPT to methenyl-H(4)MPT(+). The polypeptide is F420-dependent methylenetetrahydromethanopterin dehydrogenase (Methanosphaera stadtmanae (strain ATCC 43021 / DSM 3091 / JCM 11832 / MCB-3)).